Consider the following 602-residue polypeptide: DNA damage-binding protein CMR1 (602 aa).

Residues 35–85 form a disordered region; that stretch reads KEVDNKSFSSPSSQKRRKTTKKPVIKKEISEPSRRSRRIAGIKSELEDPKQ. Positions 48–58 are enriched in basic residues; it reads QKRRKTTKKPV. Residues 59-68 are compositionally biased toward basic and acidic residues; the sequence is IKKEISEPSR. 6 WD repeats span residues 229-270, 291-328, 390-430, 446-484, 526-569, and 571-602; these read ICHN…NDTK, RNVS…STEL, LHDK…KSVY, NSRL…KLDN, GRWV…LAHL, and EQVG…YLFE.

Belongs to the WD repeat DDB2/WDR76 family.

Functionally, DNA-binding protein that binds to both single- and double-stranded DNA. Binds preferentially to UV-damaged DNA. May be involved in DNA-metabolic processes. This chain is DNA damage-binding protein CMR1, found in Candida albicans (strain SC5314 / ATCC MYA-2876) (Yeast).